A 398-amino-acid chain; its full sequence is Flavohemoprotein (398 aa).

The 139-residue stretch at 9-147 (QLTPAQIKII…LAKLLIDLEA (139 aa)) folds into the Globin domain. Position 93 (histidine 93) interacts with heme b. Active-site charge relay system residues include tyrosine 103 and glutamate 146. Residues 155-398 (WRWFKDFKVT…KLEYFGPYDP (244 aa)) form a reductase region. The FAD-binding FR-type domain maps to 156 to 263 (RWFKDFKVTR…APPAGNFVYD (108 aa)). Residues tyrosine 196 and 212-215 (REYS) contribute to the FAD site. 276–281 (GIGITP) lines the NADP(+) pocket. An FAD-binding site is contributed by 395 to 398 (PYDP).

Belongs to the globin family. FAD serves as cofactor. The cofactor is heme b.

The protein resides in the cytoplasm. The enzyme catalyses 2 nitric oxide + NADPH + 2 O2 = 2 nitrate + NADP(+) + H(+). It catalyses the reaction 2 nitric oxide + NADH + 2 O2 = 2 nitrate + NAD(+) + H(+). With respect to regulation, inhibited by imidazoles. Functionally, nitric oxide dioxygenase involved in NO detoxification in an aerobic process, termed nitric oxide dioxygenase (NOD) reaction that utilizes O(2) and NAD(P)H to convert NO to nitrate, which protects the fungus from various noxious nitrogen compounds. Therefore, plays a central role in the inducible response to nitrosative stress. Plays a role in virulence since nitric oxide is generated by macrophages of the host immune system. In Candida albicans (strain SC5314 / ATCC MYA-2876) (Yeast), this protein is Flavohemoprotein (YHB1).